The following is a 295-amino-acid chain: Ethanolamine ammonia-lyase small subunit (295 aa).

Adenosylcob(III)alamin contacts are provided by Val-207, Glu-228, and Cys-258.

This sequence belongs to the EutC family. In terms of assembly, the basic unit is a heterodimer which dimerizes to form tetramers. The heterotetramers trimerize; 6 large subunits form a core ring with 6 small subunits projecting outwards. Requires adenosylcob(III)alamin as cofactor.

The protein resides in the bacterial microcompartment. It catalyses the reaction ethanolamine = acetaldehyde + NH4(+). The protein operates within amine and polyamine degradation; ethanolamine degradation. Functionally, catalyzes the deamination of various vicinal amino-alcohols to oxo compounds. Allows this organism to utilize ethanolamine as the sole source of nitrogen and carbon in the presence of external vitamin B12. In Escherichia coli O157:H7, this protein is Ethanolamine ammonia-lyase small subunit.